The following is a 240-amino-acid chain: Octanoyltransferase (240 aa).

The segment at 1–22 is disordered; the sequence is MGTTGTNDGATTPPANTSTPAV. A compositionally biased stretch (low complexity) spans 10-21; sequence ATTPPANTSTPA. The BPL/LPL catalytic domain maps to 51 to 236; that stretch reads EKIPDTILLL…NLVDALNGDL (186 aa). Substrate-binding positions include 89–96, 166–168, and 179–181; these read RGGRITWH, AIG, and GVA. Cysteine 197 acts as the Acyl-thioester intermediate in catalysis.

It belongs to the LipB family.

The protein localises to the cytoplasm. The catalysed reaction is octanoyl-[ACP] + L-lysyl-[protein] = N(6)-octanoyl-L-lysyl-[protein] + holo-[ACP] + H(+). The protein operates within protein modification; protein lipoylation via endogenous pathway; protein N(6)-(lipoyl)lysine from octanoyl-[acyl-carrier-protein]: step 1/2. In terms of biological role, catalyzes the transfer of endogenously produced octanoic acid from octanoyl-acyl-carrier-protein onto the lipoyl domains of lipoate-dependent enzymes. Lipoyl-ACP can also act as a substrate although octanoyl-ACP is likely to be the physiological substrate. This Corynebacterium jeikeium (strain K411) protein is Octanoyltransferase.